The following is a 432-amino-acid chain: Enolase (432 aa).

Residue Gln-167 participates in (2R)-2-phosphoglycerate binding. The active-site Proton donor is the Glu-209. Mg(2+) is bound by residues Asp-246, Glu-290, and Asp-317. (2R)-2-phosphoglycerate is bound by residues Lys-342, Arg-371, Ser-372, and Lys-393. Residue Lys-342 is the Proton acceptor of the active site.

This sequence belongs to the enolase family. In terms of assembly, component of the RNA degradosome, a multiprotein complex involved in RNA processing and mRNA degradation. Requires Mg(2+) as cofactor.

The protein resides in the cytoplasm. It localises to the secreted. Its subcellular location is the cell surface. It catalyses the reaction (2R)-2-phosphoglycerate = phosphoenolpyruvate + H2O. Its pathway is carbohydrate degradation; glycolysis; pyruvate from D-glyceraldehyde 3-phosphate: step 4/5. Functionally, catalyzes the reversible conversion of 2-phosphoglycerate (2-PG) into phosphoenolpyruvate (PEP). It is essential for the degradation of carbohydrates via glycolysis. This is Enolase from Klebsiella pneumoniae subsp. pneumoniae (strain ATCC 700721 / MGH 78578).